A 234-amino-acid chain; its full sequence is 2-C-methyl-D-erythritol 4-phosphate cytidylyltransferase (234 aa).

It belongs to the IspD/TarI cytidylyltransferase family. IspD subfamily.

The enzyme catalyses 2-C-methyl-D-erythritol 4-phosphate + CTP + H(+) = 4-CDP-2-C-methyl-D-erythritol + diphosphate. It functions in the pathway isoprenoid biosynthesis; isopentenyl diphosphate biosynthesis via DXP pathway; isopentenyl diphosphate from 1-deoxy-D-xylulose 5-phosphate: step 2/6. Functionally, catalyzes the formation of 4-diphosphocytidyl-2-C-methyl-D-erythritol from CTP and 2-C-methyl-D-erythritol 4-phosphate (MEP). This is 2-C-methyl-D-erythritol 4-phosphate cytidylyltransferase from Photobacterium profundum (strain SS9).